The following is a 1122-amino-acid chain: Transcription-repair-coupling factor (1122 aa).

The 166-residue stretch at 593 to 758 folds into the Helicase ATP-binding domain; that stretch reads DLRNGMLMDR…MTGLKELSII (166 aa). 606-613 is a binding site for ATP; that stretch reads GDVGFGKT. Positions 711–714 match the DEEQ box motif; sequence DEEQ. The Helicase C-terminal domain occupies 779-933; that stretch reads IIRDALLREH…GFTIASRDMD (155 aa).

In the N-terminal section; belongs to the UvrB family. It in the C-terminal section; belongs to the helicase family. RecG subfamily.

The protein resides in the cytoplasm. Its function is as follows. Couples transcription and DNA repair by recognizing RNA polymerase (RNAP) stalled at DNA lesions. Mediates ATP-dependent release of RNAP and its truncated transcript from the DNA, and recruitment of nucleotide excision repair machinery to the damaged site. The protein is Transcription-repair-coupling factor of Rickettsia conorii (strain ATCC VR-613 / Malish 7).